The following is a 262-amino-acid chain: Small ribosomal subunit protein eS4B (262 aa).

Residues 42 to 105 (LPLIVFLRNR…GEHFRLVYDI (64 aa)) form the S4 RNA-binding domain. S223 is modified (phosphoserine).

Belongs to the eukaryotic ribosomal protein eS4 family. Component of the small ribosomal subunit (SSU). Mature yeast ribosomes consist of a small (40S) and a large (60S) subunit. The 40S small subunit contains 1 molecule of ribosomal RNA (18S rRNA) and at least 33 different proteins. The large 60S subunit contains 3 rRNA molecules (25S, 5.8S and 5S rRNA) and at least 46 different proteins.

The protein resides in the cytoplasm. Its subcellular location is the nucleus. The protein localises to the nucleolus. In terms of biological role, component of the ribosome, a large ribonucleoprotein complex responsible for the synthesis of proteins in the cell. The small ribosomal subunit (SSU) binds messenger RNAs (mRNAs) and translates the encoded message by selecting cognate aminoacyl-transfer RNA (tRNA) molecules. The large subunit (LSU) contains the ribosomal catalytic site termed the peptidyl transferase center (PTC), which catalyzes the formation of peptide bonds, thereby polymerizing the amino acids delivered by tRNAs into a polypeptide chain. The nascent polypeptides leave the ribosome through a tunnel in the LSU and interact with protein factors that function in enzymatic processing, targeting, and the membrane insertion of nascent chains at the exit of the ribosomal tunnel. In Schizosaccharomyces pombe (strain 972 / ATCC 24843) (Fission yeast), this protein is Small ribosomal subunit protein eS4B (rps402).